We begin with the raw amino-acid sequence, 730 residues long: Cyclin-T2 (730 aa).

Positions 1 to 300 (MASGRGASSR…SVTGVPTNPS (300 aa)) are interaction with MDFIC and MDFI. A Cyclin N-terminal domain is found at 12-147 (FFTREQLENT…IMLQTLGFEI (136 aa)). The tract at residues 250–300 (RLKKIRNWRANQAARKPKVDGQVSETPLLGSSLVQNSILVDSVTGVPTNPS) is interaction with POLR2A. Polar residues-rich tracts occupy residues 341 to 350 (TSYGLSSHQE) and 360 to 389 (TEQLYSQKQETSLSGSQYNINFQQGPSISL). Positions 341 to 430 (TSYGLSSHQE…GPISTTPGII (90 aa)) are disordered. Over residues 398 to 412 (DKISDHSSVKQEYTH) the composition is skewed to basic and acidic residues. Lys407 is covalently cross-linked (Glycyl lysine isopeptide (Lys-Gly) (interchain with G-Cter in SUMO2)). Residue Ser480 is modified to Phosphoserine. The disordered stretch occupies residues 497 to 652 (DKKEKSGSLK…SSSSSSSSVK (156 aa)). Basic and acidic residues-rich tracts occupy residues 517–543 (SASKEELKMKIKVSSSERHSSSDEGSG) and 552–565 (ISRDHKEKHKEHPS). Basic residues predominate over residues 566–578 (SRHHTSSHKHSHS). A compositionally biased stretch (low complexity) spans 579–588 (HSGSSSGGSK). Ser601 bears the Phosphoserine mark. Low complexity-rich tracts occupy residues 606–616 (SSDGISSSSSS) and 637–652 (SSKSSGSSSSSSSSVK).

The protein belongs to the cyclin family. Cyclin C subfamily. Interacts with CDK9 to form P-TEFb. Interacts with POLR2A (via the C-terminal domain (CTD)); mediates transcriptional activity. Interacts with HEXIM1; mediates formation of a tripartite complex with KPNA2. Interacts with HEXIM2. Interacts with PKN1; enhances MYOD1-dependent transcription. P-TEFB complex interacts with RB1; promotes phosphorylation of RB1. P-TEFB complex interacts with MYOD1; promotes the transcriptional activity of MYOD1 through its CDK9-mediated phosphorylation. Interacts with MDFI and MDFIC. Interacts with MON1B; down-regulates CCNT2-mediated activation of viral promoters during herpes simplex virus 1/HHV-1 infection. As to quaternary structure, (Microbial infection) Interacts with HIV-2 and SIV Tat. Does not bind efficiently to the transactivation domain of the HIV-1 Tat. In terms of tissue distribution, ubiquitously expressed.

It is found in the cytoplasm. It localises to the perinuclear region. Its subcellular location is the nucleus. Regulatory subunit of the cyclin-dependent kinase pair (CDK9/cyclin T) complex, also called positive transcription elongation factor B (P-TEFB), which is proposed to facilitate the transition from abortive to production elongation by phosphorylating the CTD (carboxy-terminal domain) of the large subunit of RNA polymerase II (RNAP II). The activity of this complex is regulated by binding with 7SK snRNA. Plays a role during muscle differentiation; P-TEFB complex interacts with MYOD1; this tripartite complex promotes the transcriptional activity of MYOD1 through its CDK9-mediated phosphorylation and binds the chromatin of promoters and enhancers of muscle-specific genes; this event correlates with hyperphosphorylation of the CTD domain of RNA pol II. In addition, enhances MYOD1-dependent transcription through interaction with PKN1. Involved in early embryo development. In terms of biological role, (Microbial infection) Promotes transcriptional activation of early and late herpes simplex virus 1/HHV-1 promoters. The sequence is that of Cyclin-T2 from Homo sapiens (Human).